Consider the following 185-residue polypeptide: MYLFLSNLSLADISFTSTTLPKMIVDIQTNNRAISYSGCLTQMSFFMLFGCLDSLLLTAMAYDRFVAICHPLHYQVIMNPRLCGLLVFLSILISLLVSQLHNSVVLQLTYFKSVDISHFFCDPSLLLNLACSDTFTNNIVMYFVGAISGFLPISGIFFSYYKIVSSILRMPSPGGKYKAFSTCGS.

A helical transmembrane segment spans residues 1 to 11 (MYLFLSNLSLA). Residues 12 to 42 (DISFTSTTLPKMIVDIQTNNRAISYSGCLTQ) are Extracellular-facing. The helical transmembrane segment at 43–62 (MSFFMLFGCLDSLLLTAMAY) threads the bilayer. Over 63–84 (DRFVAICHPLHYQVIMNPRLCG) the chain is Cytoplasmic. A helical transmembrane segment spans residues 85 to 105 (LLVFLSILISLLVSQLHNSVV). Over 106-138 (LQLTYFKSVDISHFFCDPSLLLNLACSDTFTNN) the chain is Extracellular. A helical transmembrane segment spans residues 139 to 160 (IVMYFVGAISGFLPISGIFFSY). Over 161 to 182 (YKIVSSILRMPSPGGKYKAFST) the chain is Cytoplasmic. The helical transmembrane segment at 183–185 (CGS) threads the bilayer.

The protein belongs to the G-protein coupled receptor 1 family. As to expression, tongue specific.

It localises to the cell membrane. Its function is as follows. Possible taste receptor. This Rattus norvegicus (Rat) protein is Putative gustatory receptor clone PTE01.